The sequence spans 457 residues: Transmembrane protease serine 5 (457 aa).

The segment at 1–21 (MSLMLDDQPPMEAQYAEEGPG) is disordered. Over 1–49 (MSLMLDDQPPMEAQYAEEGPGPGIFRAEPGDQQHPISQAVCWRSMRRGC) the chain is Cytoplasmic. Residues 50–70 (AVLGALGLLAGAGVGSWLLVL) traverse the membrane as a helical; Signal-anchor for type II membrane protein segment. The Extracellular segment spans residues 71-457 (YLCPAASQPI…IHDTAQDSLL (387 aa)). In terms of domain architecture, SRCR spans 112–207 (FRINSEDFLL…SGQVVSLRCS (96 aa)). Disulfide bonds link C135–C196, C148–C206, C209–C328, C243–C259, C342–C411, C374–C390, and C401–C429. Residues N163, N170, and N195 are each glycosylated (N-linked (GlcNAc...) asparagine). The Peptidase S1 domain occupies 218–453 (IVGGQSVAPG…FLDWIHDTAQ (236 aa)). Residues H258 and D308 each act as charge relay system in the active site. N319 and N375 each carry an N-linked (GlcNAc...) asparagine glycan. S405 (charge relay system) is an active-site residue.

This sequence belongs to the peptidase S1 family. As to expression, brain-specific. Predominantly expressed in neurons, in their axons, and at the synapses of motoneurons in the spinal cord.

The protein resides in the cell membrane. May play a role in hearing. The chain is Transmembrane protease serine 5 (TMPRSS5) from Homo sapiens (Human).